We begin with the raw amino-acid sequence, 473 residues long: 1-aminocyclopropane-1-carboxylate synthase (473 aa).

Substrate-binding positions include 84-85 (DY), Y145, and D151. The residue at position 273 (K273) is an N6-(pyridoxal phosphate)lysine.

The protein belongs to the class-I pyridoxal-phosphate-dependent aminotransferase family. In terms of assembly, homodimer. Pyridoxal 5'-phosphate serves as cofactor.

It catalyses the reaction S-adenosyl-L-methionine = 1-aminocyclopropane-1-carboxylate + S-methyl-5'-thioadenosine + H(+). It carries out the reaction (2S)-2-amino-3-butenoate + H2O = 2-oxobutanoate + NH4(+). Its pathway is alkene biosynthesis; ethylene biosynthesis via S-adenosyl-L-methionine; ethylene from S-adenosyl-L-methionine: step 1/2. Its activity is regulated as follows. Inhibited by L-aminoethoxyvinylglycine (AVG). Inhibited by L-vinylglycine (L-VG). Inhibited by S-methylmethionine through a L-VG ketimine intermediate. Functionally, catalyzes the formation of 1-aminocyclopropane-1-carboxylate, a direct precursor of ethylene in higher plants. Also catalyzes the conversion of L-vinylglycine (L-VG) to alpha-ketobutyrate and ammonia. Can use S-methylmethionine as substrate. The sequence is that of 1-aminocyclopropane-1-carboxylate synthase from Malus domestica (Apple).